The chain runs to 453 residues: Ezy-1 protein (453 aa).

The N-terminal stretch at 1–28 is a signal peptide; that stretch reads MQLSNSLRSARSAAASSGCALASRPVVA. 3 disordered regions span residues 167–187, 272–307, and 412–453; these read SDGG…DADG, TGKA…SSGG, and SAGD…SPNM. Over residues 279 to 300 the composition is skewed to acidic residues; the sequence is AEGDDGEGEEEGEAQDVGEDAV. Positions 415 to 425 are enriched in basic and acidic residues; the sequence is DGHEPEPKRPE.

The polypeptide is Ezy-1 protein (Ezy-1) (Chlamydomonas reinhardtii (Chlamydomonas smithii)).